The primary structure comprises 50 residues: Omega-conotoxin Bu8 (50 aa).

A signal peptide is located at residue Ala-1. Residues 2–24 (EDSRGTQLHRALRKATKLSESTR) constitute a propeptide that is removed on maturation. 3 disulfides stabilise this stretch: Cys-25/Cys-40, Cys-32/Cys-44, and Cys-39/Cys-49. The residue at position 49 (Cys-49) is a Cysteine amide.

Belongs to the conotoxin O1 superfamily. Expressed by the venom duct.

Its subcellular location is the secreted. In terms of biological role, omega-conotoxins act at presynaptic membranes, they bind and block voltage-gated calcium channels (Cav). This toxin selectively and potently inhibits depolarization-activated rat Cav2.2/CACNA1B currents (IC(50)=89 nM), when coexpressed with alpha-2/delta-1 (CACNA2D1) and beta-3 (CACNB3) subunits. In vivo, is lethal to fish and displays potent analgesic activity in mice pain models of hot plate and acetic acid writhing but has fewer side effects on mouse motor function and lower toxicity in goldfish. Shows higher or similar analgesic activity in the pain models mentioned above compared to MVIIA, and lower side effects. In addition, it blocks Cav2.2/CACNA1B more rapidly than MVIIA and also dissociates more rapidly. The sequence is that of Omega-conotoxin Bu8 from Conus bullatus (Bubble cone).